A 799-amino-acid chain; its full sequence is MGASLLLPLRRRPWTCRTCLLQARRSLETAASPATHRAAFDYLPSKNDAQKKSDDDTLRRVFDSQPFWREFSQRSAAHLKPTGLVQNQYLTSPDGFRVFATTTLQKCQAIVAKVLAGTTLEDYQSMARDLDRLSDLLCRVIDLSDFIRVIHPDPRVQEAATQAYALMFEYMNVLNTTTGLNDQLKKAAANPEVTARWSDEEKIVAQILIKDFSNSAIHMPPHARQRFVNLSNDISQLGNTFVNAAEPAKSHVTVSANSLRGLDPILVQQIKRWNRTASVPSMGLIPRLALRSVHDEGVRREVYLATRTSSARQIQRLEQLLAKRAELAQLSGYDSFAHMTLSDKMAKSPEAVSNFLTSLVGSNRPYVQEELAQLQSMKGSAGRLQPWDHAYYVHQRVLQYSQSRRSRELSAVPEFFSLGTVMQGLSRLFDRLYGVRLVPQETAAGETWNSDVRRLDVVDEADRHIAVIYCDLFSRPNKHPNPAHYTLRCAREISAEEVAECATTMDASAHPNDGMATAVDRDAKTLRQLPTIALVCDFPEPPATGTGRPSLLSEHSVRTLFHEMGHALHSILGQTRLQSISGTRCATDFAELPSVLMERFATAPEVLALYARHWETDAPLSESMMQHMEKDRTAHGSIYGAMENESQILMALVDQAYHSLPAGQATSIDSTAVFHQVSAEHCTLPDPTDTKPPTSWQGFFGHLHGYGATYYSYIFDRAIANKLWEDVFQQGKAAVDRQAGERYKNEVLRWGGGRNGWNCVAGVLGSAHPANADGRLVEGGDEAMREVGRWGLGRDGVSE.

A Zn(2+)-binding site is contributed by His-562. Residue Glu-563 is part of the active site. Residues His-566 and His-569 each coordinate Zn(2+).

The protein belongs to the peptidase M3 family. The cofactor is Zn(2+).

Its subcellular location is the mitochondrion matrix. It carries out the reaction Release of an N-terminal octapeptide as second stage of processing of some proteins imported into the mitochondrion.. Functionally, cleaves proteins, imported into the mitochondrion, to their mature size. While most mitochondrial precursor proteins are processed to the mature form in one step by mitochondrial processing peptidase (MPP), the sequential cleavage by MIP of an octapeptide after initial processing by MPP is a required step for a subgroup of nuclear-encoded precursor proteins destined for the matrix or the inner membrane. This Aspergillus niger (strain ATCC MYA-4892 / CBS 513.88 / FGSC A1513) protein is Mitochondrial intermediate peptidase (oct1).